We begin with the raw amino-acid sequence, 466 residues long: Trigger factor (466 aa).

Residues 166-245 (GDFAQIDLVA…LNAVKERELP (80 aa)) form the PPIase FKBP-type domain. Disordered regions lie at residues 313 to 332 (LEQE…TESS) and 424 to 466 (LPDD…AADK). The segment covering 426 to 444 (DDGEAVDEDATPEDTDAPA) has biased composition (acidic residues). Basic residues predominate over residues 453–466 (PKKKAAAKKKAADK).

It belongs to the FKBP-type PPIase family. Tig subfamily.

The protein resides in the cytoplasm. The catalysed reaction is [protein]-peptidylproline (omega=180) = [protein]-peptidylproline (omega=0). In terms of biological role, involved in protein export. Acts as a chaperone by maintaining the newly synthesized protein in an open conformation. Functions as a peptidyl-prolyl cis-trans isomerase. The protein is Trigger factor of Leifsonia xyli subsp. xyli (strain CTCB07).